The sequence spans 234 residues: Adenosine 5'-phosphosulfate reductase (234 aa).

[4Fe-4S] cluster-binding residues include Cys120, Cys121, Cys203, and Cys206. Cys229 (nucleophile; cysteine thiosulfonate intermediate) is an active-site residue.

Belongs to the PAPS reductase family. CysH subfamily. The cofactor is [4Fe-4S] cluster.

It is found in the cytoplasm. The enzyme catalyses [thioredoxin]-disulfide + sulfite + AMP + 2 H(+) = adenosine 5'-phosphosulfate + [thioredoxin]-dithiol. It participates in sulfur metabolism; hydrogen sulfide biosynthesis; sulfite from sulfate. Its function is as follows. Catalyzes the formation of sulfite from adenosine 5'-phosphosulfate (APS) using thioredoxin as an electron donor. This is Adenosine 5'-phosphosulfate reductase from Bacillus thuringiensis (strain Al Hakam).